A 187-amino-acid polypeptide reads, in one-letter code: Elongation factor P (187 aa).

It belongs to the elongation factor P family.

The protein resides in the cytoplasm. The protein operates within protein biosynthesis; polypeptide chain elongation. Involved in peptide bond synthesis. Stimulates efficient translation and peptide-bond synthesis on native or reconstituted 70S ribosomes in vitro. Probably functions indirectly by altering the affinity of the ribosome for aminoacyl-tRNA, thus increasing their reactivity as acceptors for peptidyl transferase. The chain is Elongation factor P from Azobacteroides pseudotrichonymphae genomovar. CFP2.